Reading from the N-terminus, the 168-residue chain is Large ribosomal subunit protein uL10 (168 aa).

This sequence belongs to the universal ribosomal protein uL10 family. In terms of assembly, part of the ribosomal stalk of the 50S ribosomal subunit. The N-terminus interacts with L11 and the large rRNA to form the base of the stalk. The C-terminus forms an elongated spine to which L12 dimers bind in a sequential fashion forming a multimeric L10(L12)X complex.

Forms part of the ribosomal stalk, playing a central role in the interaction of the ribosome with GTP-bound translation factors. The chain is Large ribosomal subunit protein uL10 from Pediococcus pentosaceus (strain ATCC 25745 / CCUG 21536 / LMG 10740 / 183-1w).